The following is a 341-amino-acid chain: Delta(1)-pyrroline-2-carboxylate/Delta(1)-piperideine-2-carboxylate reductase (341 aa).

The active-site Charge relay system is the S52. The Proton donor role is filled by H53. Position 57 (R57) interacts with substrate. 125 to 129 (HFAAL) is a binding site for NADP(+). T165 provides a ligand contact to substrate. 183-185 (DMA) is a binding site for NADP(+). 191–192 (HG) is a substrate binding site. The Charge relay system role is filled by D193. NADP(+)-binding positions include 235-236 (HK) and 308-314 (RMPGERR).

The protein belongs to the LDH2/MDH2 oxidoreductase family. Homodimer.

The catalysed reaction is L-pipecolate + NADP(+) = Delta(1)-piperideine-2-carboxylate + NADPH + H(+). The enzyme catalyses L-proline + NADP(+) = 1-pyrroline-2-carboxylate + NADPH + H(+). It carries out the reaction N-methyl-L-alanine + NADP(+) + H2O = methylamine + pyruvate + NADPH + H(+). With respect to regulation, is inhibited by the substrate analog pyrrole-2-carboxylate, but not by N-formylphenylalanine. Functionally, catalyzes the reduction of both Delta(1)-pyrroline-2-carboxylate (Pyr2C) and Delta(1)-piperideine-2-carboxylate (Pip2C) to L-proline and L-pipecolate, respectively, using NADPH as the electron donor. Can use NADH instead of NADPH, although with much less efficiency. Plays an essential role in the catabolism of D-proline and D-lysine, which allows P.putida to grow on each of these amino-acids as a sole carbon source; D-lysine appears to be catabolized only through the pipecolate pathway. Can also catalyze the reverse oxidation reactions, albeit at a much lower rate. To a lesser extent, is able to catalyze in vitro the NADPH-dependent formation of N-alkyl-L-amino acids from the corresponding alpha-oxo acids and alkylamines, e.g. the formation of N-methylalanine from pyruvate and N-methylamine; cannot use ammonia as substrate for these reductive amination reactions. Shows neither malate dehydrogenase nor lactate dehydrogenase activity. In Pseudomonas putida (Arthrobacter siderocapsulatus), this protein is Delta(1)-pyrroline-2-carboxylate/Delta(1)-piperideine-2-carboxylate reductase.